The following is a 347-amino-acid chain: UDP-N-acetylenolpyruvoylglucosamine reductase (347 aa).

One can recognise an FAD-binding PCMH-type domain in the interval 23–197; that stretch reads LPARAARLLR…LRVRFRLPQA (175 aa). Arginine 174 is an active-site residue. The Proton donor role is filled by serine 247. Residue glutamate 343 is part of the active site.

It belongs to the MurB family. FAD is required as a cofactor.

It is found in the cytoplasm. It catalyses the reaction UDP-N-acetyl-alpha-D-muramate + NADP(+) = UDP-N-acetyl-3-O-(1-carboxyvinyl)-alpha-D-glucosamine + NADPH + H(+). Its pathway is cell wall biogenesis; peptidoglycan biosynthesis. Its function is as follows. Cell wall formation. The chain is UDP-N-acetylenolpyruvoylglucosamine reductase from Azoarcus sp. (strain BH72).